The sequence spans 119 residues: Phytosulfokines 2 (119 aa).

Positions 1–34 (MSTTRGVSSSSAAAALALLLLFALCFFSFHFAAA) are cleaved as a signal peptide. The propeptide occupies 35–109 (ARAVPRDEHQ…RRLLSDAHLD (75 aa)). Sulfotyrosine is present on residues tyrosine 110 and tyrosine 112. A propeptide spanning residues 115–119 (HKNKP) is cleaved from the precursor.

Belongs to the phytosulfokine family. In terms of processing, sulfation is important for activity and for the binding to a putative membrane receptor. Post-translationally, PSK-alpha is produced by endopeptidase digestion. PSK-beta is produced from PSK-alpha by exopeptidase digestion.

The protein resides in the secreted. Functionally, promotes plant cell differentiation, organogenesis and somatic embryogenesis as well as cell proliferation. The polypeptide is Phytosulfokines 2 (PSK2) (Oryza sativa subsp. japonica (Rice)).